Consider the following 125-residue polypeptide: Mediator of RNA polymerase II transcription subunit 11 (125 aa).

Belongs to the Mediator complex subunit 11 family. In terms of assembly, component of the Mediator complex.

It localises to the nucleus. Its function is as follows. Component of the Mediator complex, a coactivator involved in the regulated transcription of nearly all RNA polymerase II-dependent genes. Mediator functions as a bridge to convey information from gene-specific regulatory proteins to the basal RNA polymerase II transcription machinery. Mediator is recruited to promoters by direct interactions with regulatory proteins and serves as a scaffold for the assembly of a functional pre-initiation complex with RNA polymerase II and the general transcription factors. This chain is Mediator of RNA polymerase II transcription subunit 11 (MED11), found in Candida glabrata (strain ATCC 2001 / BCRC 20586 / JCM 3761 / NBRC 0622 / NRRL Y-65 / CBS 138) (Yeast).